A 413-amino-acid chain; its full sequence is Divalent metal cation transporter MntH (413 aa).

The Cytoplasmic segment spans residues 1 to 19; the sequence is MTDNRVENSSGRAARKLRL. The chain crosses the membrane as a helical span at residues 20 to 39; sequence ALMGPAFIAAIGYIDPGNFA. Over 40 to 51 the chain is Periplasmic; that stretch reads TNIQAGASFGYQ. A helical transmembrane segment spans residues 52-71; the sequence is LLWVVVWANLMAMLIQILSA. Residues 72–95 lie on the Cytoplasmic side of the membrane; it reads KLGIATGKNLAEQIRDHYPRPVVW. The helical transmembrane segment at 96–118 threads the bilayer; sequence FYWVQAEIIAMATDLAEFIGAAI. Topologically, residues 119–125 are periplasmic; it reads GFKLILG. Residues 126-145 form a helical membrane-spanning segment; sequence VSLLQGAVLTGIATFLILML. Topologically, residues 146–155 are cytoplasmic; it reads QRRGQKPLEK. A helical membrane pass occupies residues 156 to 175; the sequence is VIGGLLLFVAAAYIVELFFS. Residues 176-196 lie on the Periplasmic side of the membrane; sequence QPDMAQLGKGMVIPALPNPEA. A helical transmembrane segment spans residues 197-220; that stretch reads VFLAAGVLGATIMPHVIYLHSSLT. Residues 221–238 lie on the Cytoplasmic side of the membrane; the sequence is QHLHGGTRQQRYSATKWD. A helical membrane pass occupies residues 239–258; that stretch reads VAIAMTIAGFVNLAMMATAA. Residues 259–276 lie on the Periplasmic side of the membrane; that stretch reads AAFHFSGHTGIADLDQAY. The helical transmembrane segment at 277–297 threads the bilayer; sequence LTLEPLLSHAAATVFGLSLVA. The Cytoplasmic portion of the chain corresponds to 298–327; it reads AGLSSTVVGTLAGQVVMQGFVRFHIPLWVR. Residues 328–344 traverse the membrane as a helical segment; the sequence is RTITMLPSFIVILMGLD. At 345–350 the chain is on the periplasmic side; it reads PTRILV. Residues 351-370 form a helical membrane-spanning segment; it reads MSQVLLSFGIALALVPLLIF. Residues 371-387 lie on the Cytoplasmic side of the membrane; that stretch reads TSNATLMGELVNTRRVK. The helical transmembrane segment at 388–406 threads the bilayer; sequence QVGWIIVVLVVALNIWLLV. At 407–413 the chain is on the periplasmic side; that stretch reads GTVMGLS.

This sequence belongs to the NRAMP family.

Its subcellular location is the cell inner membrane. In terms of biological role, h(+)-stimulated, divalent metal cation uptake system. The sequence is that of Divalent metal cation transporter MntH from Salmonella paratyphi C (strain RKS4594).